Reading from the N-terminus, the 184-residue chain is ADP-ribosylation factor 6 (184 aa).

The N-myristoyl glycine moiety is linked to residue Gly2. Residues Gly28–Thr35, Asp71–Gln75, and Asn130–Asp133 contribute to the GTP site.

This sequence belongs to the small GTPase superfamily. Arf family.

It is found in the cell membrane. Functionally, GTP-binding protein that functions as a molecular switch for the activation of 'new end take off' (NETO), a process in which the directions of cell growth change from a monopolar manner to a bipolar manner in fission yeast. Involved in supplying membrane to the growing new end. The chain is ADP-ribosylation factor 6 (arf6) from Schizosaccharomyces pombe (strain 972 / ATCC 24843) (Fission yeast).